Here is a 395-residue protein sequence, read N- to C-terminus: uncharacterized protein (395 aa).

A disordered region spans residues 247-270 (GGTVVPPNPDQPNPTPPDSSSPNY). Over residues 252–265 (PPNPDQPNPTPPDS) the composition is skewed to pro residues.

This is an uncharacterized protein from Vibrio cholerae serotype O1 (strain ATCC 39315 / El Tor Inaba N16961).